The chain runs to 134 residues: Small ribosomal subunit protein uS11 (134 aa).

Belongs to the universal ribosomal protein uS11 family. Part of the 30S ribosomal subunit. Interacts with proteins S7 and S18. Binds to IF-3.

Functionally, located on the platform of the 30S subunit, it bridges several disparate RNA helices of the 16S rRNA. Forms part of the Shine-Dalgarno cleft in the 70S ribosome. The protein is Small ribosomal subunit protein uS11 of Acidovorax ebreus (strain TPSY) (Diaphorobacter sp. (strain TPSY)).